Here is an 86-residue protein sequence, read N- to C-terminus: UPF0297 protein BBR47_19030 (86 aa).

Belongs to the UPF0297 family.

This is UPF0297 protein BBR47_19030 from Brevibacillus brevis (strain 47 / JCM 6285 / NBRC 100599).